We begin with the raw amino-acid sequence, 185 residues long: Ribosome-recycling factor (185 aa).

The protein belongs to the RRF family.

The protein localises to the cytoplasm. Responsible for the release of ribosomes from messenger RNA at the termination of protein biosynthesis. May increase the efficiency of translation by recycling ribosomes from one round of translation to another. In Clostridium perfringens (strain ATCC 13124 / DSM 756 / JCM 1290 / NCIMB 6125 / NCTC 8237 / Type A), this protein is Ribosome-recycling factor.